Here is a 281-residue protein sequence, read N- to C-terminus: Undecaprenyl-diphosphatase (281 aa).

Helical transmembrane passes span 90–110, 113–133, 147–167, 191–211, 217–237, and 257–277; these read WLVT…QDSI, VLRG…VLGA, LSWK…IPGV, SFLL…YDEL, IAWV…YAVI, and IAAA…AFQG.

This sequence belongs to the UppP family.

The protein resides in the cell membrane. The catalysed reaction is di-trans,octa-cis-undecaprenyl diphosphate + H2O = di-trans,octa-cis-undecaprenyl phosphate + phosphate + H(+). In terms of biological role, catalyzes the dephosphorylation of undecaprenyl diphosphate (UPP). Confers resistance to bacitracin. This chain is Undecaprenyl-diphosphatase, found in Kineococcus radiotolerans (strain ATCC BAA-149 / DSM 14245 / SRS30216).